A 343-amino-acid chain; its full sequence is MGIRISHLRKQFASFTALDDITLDVRQGELLALLGPSGSGKTTLLRIMAGLEHADGGQVLFGDEDATRMSVQSRRVGFVFQHYALFKHMDVFENIAFGLRVRRGKERWAEARIRARVEELLALVQLQGLEQRYPTQLSGGQRQRVALARALAIEPRVLLLDEPFGALDAQVRRDLRRWLRELHEQTGLTTVFVTHDQEEALELADRVAILNRGRIEQLDTPARVYDTPASPFVYSFVGAVNRIPGVLAHGQIQVAGHALPSANPALAAGPVEVYVRPEDLVPDADGWPATVAWAQRSGARLRVRAILDAAGNEVEVELPASAGTITAGQQLRLAARHYGVFPA.

The ABC transporter domain maps to 3–237 (IRISHLRKQF…PASPFVYSFV (235 aa)). 35-42 (GPSGSGKT) lines the ATP pocket.

The protein belongs to the ABC transporter superfamily. Sulfate/tungstate importer (TC 3.A.1.6) family. As to quaternary structure, the complex is composed of two ATP-binding proteins (CysA), two transmembrane proteins (CysT and CysW) and a solute-binding protein (CysP).

It localises to the cell inner membrane. The enzyme catalyses sulfate(out) + ATP + H2O = sulfate(in) + ADP + phosphate + H(+). It catalyses the reaction thiosulfate(out) + ATP + H2O = thiosulfate(in) + ADP + phosphate + H(+). Its function is as follows. Part of the ABC transporter complex CysAWTP involved in sulfate/thiosulfate import. Responsible for energy coupling to the transport system. This is Sulfate/thiosulfate import ATP-binding protein CysA from Xanthomonas campestris pv. campestris (strain ATCC 33913 / DSM 3586 / NCPPB 528 / LMG 568 / P 25).